The following is a 518-amino-acid chain: Light-independent protochlorophyllide reductase subunit B (518 aa).

Residue Asp36 coordinates [4Fe-4S] cluster. Asp299 serves as the catalytic Proton donor. Position 434 to 435 (434 to 435 (GM)) interacts with substrate.

The protein belongs to the ChlB/BchB/BchZ family. In terms of assembly, protochlorophyllide reductase is composed of three subunits; ChlL, ChlN and ChlB. Forms a heterotetramer of two ChlB and two ChlN subunits. [4Fe-4S] cluster is required as a cofactor.

The protein resides in the plastid. Its subcellular location is the chloroplast. The catalysed reaction is chlorophyllide a + oxidized 2[4Fe-4S]-[ferredoxin] + 2 ADP + 2 phosphate = protochlorophyllide a + reduced 2[4Fe-4S]-[ferredoxin] + 2 ATP + 2 H2O. It functions in the pathway porphyrin-containing compound metabolism; chlorophyll biosynthesis (light-independent). Its function is as follows. Component of the dark-operative protochlorophyllide reductase (DPOR) that uses Mg-ATP and reduced ferredoxin to reduce ring D of protochlorophyllide (Pchlide) to form chlorophyllide a (Chlide). This reaction is light-independent. The NB-protein (ChlN-ChlB) is the catalytic component of the complex. The chain is Light-independent protochlorophyllide reductase subunit B from Adiantum capillus-veneris (Maidenhair fern).